A 248-amino-acid polypeptide reads, in one-letter code: MSFVVIIPARYASTRLPGKPLVDINGKPMIVHVLERARESGAERIIVATDHEDVARAVEAAGGEVCMTRADHQSGTERLAEVVEKCAFSDDTVIVNVQGDEPMIPATIIRQVADNLAQRQVGMATLAVPIHNAEEAFNPNAVKVVLDAEGYALYFSRATIPWDRDRFVKDLETVGDNFLRHLGIYGYRAGFIRRYVTWQPSPLEHIEMLEQLRVLWYGEKIHVAVAQEVPGTGVDTPEDLKRVRAEMR.

It belongs to the KdsB family.

The protein localises to the cytoplasm. The catalysed reaction is 3-deoxy-alpha-D-manno-oct-2-ulosonate + CTP = CMP-3-deoxy-beta-D-manno-octulosonate + diphosphate. It participates in nucleotide-sugar biosynthesis; CMP-3-deoxy-D-manno-octulosonate biosynthesis; CMP-3-deoxy-D-manno-octulosonate from 3-deoxy-D-manno-octulosonate and CTP: step 1/1. The protein operates within bacterial outer membrane biogenesis; lipopolysaccharide biosynthesis. Activates KDO (a required 8-carbon sugar) for incorporation into bacterial lipopolysaccharide in Gram-negative bacteria. The chain is 3-deoxy-manno-octulosonate cytidylyltransferase from Escherichia coli O127:H6 (strain E2348/69 / EPEC).